Here is a 199-residue protein sequence, read N- to C-terminus: Phosphoheptose isomerase (199 aa).

Residues Met36–Asp198 form the SIS domain. Residue Asn51–Gly53 participates in substrate binding. Residues His60 and Glu64 each contribute to the Zn(2+) site. Substrate-binding positions include Glu64, Asn93 to Asp94, Ser119 to Ser121, Ser124, and Gln174. Zn(2+) is bound by residues Gln174 and His182.

The protein belongs to the SIS family. GmhA subfamily. Homotetramer. The cofactor is Zn(2+).

The protein resides in the cytoplasm. It catalyses the reaction 2 D-sedoheptulose 7-phosphate = D-glycero-alpha-D-manno-heptose 7-phosphate + D-glycero-beta-D-manno-heptose 7-phosphate. The protein operates within carbohydrate biosynthesis; D-glycero-D-manno-heptose 7-phosphate biosynthesis; D-glycero-alpha-D-manno-heptose 7-phosphate and D-glycero-beta-D-manno-heptose 7-phosphate from sedoheptulose 7-phosphate: step 1/1. Its function is as follows. Catalyzes the isomerization of sedoheptulose 7-phosphate in D-glycero-D-manno-heptose 7-phosphate. In Coxiella burnetii (strain CbuK_Q154) (Coxiella burnetii (strain Q154)), this protein is Phosphoheptose isomerase.